Here is a 1071-residue protein sequence, read N- to C-terminus: MPKRTDLKSILIIGAGPIVIGQACEFDYSGAQACKALREEGYKVILVNSNPATIMTDPEMADVTYIEPIMWQTVEKIIAKERPDAILPTMGGQTALNCALDLARNGVLAKYNVELIGATEDAIDKAEDRGRFKEAMEKIGLSCPKSFVCHTMNEALAAQEQVGFPTLIRPSFTMGGSGGGIAYNKDEFLAICERGFDASPTHELLIEQSVLGWKEYEMEVVRDKNDNCIIICSIENFDPMGVHTGDSITVAPAQTLTDKEYQIMRNASLAVLREIGVDTGGSNVQFAVNPENGEMIVIEMNPRVSRSSALASKATGFPIAKVAAKLAVGFTLDELRNDITGGRTPASFEPSIDYVVTKIPRFAFEKFPAADDRLTTQMKSVGEVMAMGRTIQESFQKALRGLETGLCGFNPRSSDKAEIRRELANPGPERMLFVADAFRAGFTLEEIHEICAIDPWFLAQIEDLMKEEKAVSDGVLSDLDYAALRRLKRKGFSDKRIAQLLDVKEKEVREHRYVLNLHPVYKRVDTCAAEFATETAYLYSTYEEECEARPSDRKKVMILGGGPNRIGQGIEFDYCCVHAALALRESGFETIMVNCNPETVSTDFDTSDRLYFEPLTLEDVLEIVRTENPWGVIVHYGGQTPLKLANALVENGVNIIGTSADSIDAAEDRERFQKVLNDLGLRQPPNRIAHNEEEALVKAEEIGYPLVVRPSYVLGGRAMQIVHSAEQLQKYMREAVQVSEDSPVLLDFFLNNAIEVDVDCVSDGKDVVIGGIMQHVEQAGIHSGDSGCSLPPYSLSEEIQDEIRRQTKAMAYALGVVGLMNVQFAVQDGVVFVLEVNPRASRTVPFVSKATGVPLAKVGARCMAGISLKEQGVEKEVVPDFYAVKEAVFPFIKFPGVDTILGPEMRSTGEVMGVGASFGEAYYKAQLGAGERLNPTGKIFLSVREEDKERVIKTAKNFQALGYGICATRGTAQYLTEHGLIVQTINKVPEGRPHIGDALKNGEIALVVNTVSSDPQSVSDSHIIRQSALQQRVPQYTTTAGGEAMSEGAKSRDHLGVYSVQELHGRLKNRS.

The interval 1–403 (MPKRTDLKSI…SFQKALRGLE (403 aa)) is carboxyphosphate synthetic domain. R129, R169, G175, G176, Q208, V210, E215, G241, V242, H243, Q285, and E299 together coordinate ATP. The ATP-grasp 1 domain maps to 133-328 (KEAMEKIGLS…IAKVAAKLAV (196 aa)). The Mg(2+) site is built by Q285, E299, and N301. The Mn(2+) site is built by Q285, E299, and N301. Residues 404–548 (TGLCGFNPRS…YSTYEEECEA (145 aa)) are oligomerization domain. The tract at residues 549–930 (RPSDRKKVMI…AYYKAQLGAG (382 aa)) is carbamoyl phosphate synthetic domain. The 192-residue stretch at 673-864 (QKVLNDLGLR…LAKVGARCMA (192 aa)) folds into the ATP-grasp 2 domain. Positions 709, 748, 750, 755, 780, 781, 782, 783, 823, and 835 each coordinate ATP. Residues Q823, E835, and N837 each contribute to the Mg(2+) site. Residues Q823, E835, and N837 each coordinate Mn(2+). Positions 931–1071 (ERLNPTGKIF…ELHGRLKNRS (141 aa)) constitute an MGS-like domain. The interval 931–1071 (ERLNPTGKIF…ELHGRLKNRS (141 aa)) is allosteric domain.

The protein belongs to the CarB family. Composed of two chains; the small (or glutamine) chain promotes the hydrolysis of glutamine to ammonia, which is used by the large (or ammonia) chain to synthesize carbamoyl phosphate. Tetramer of heterodimers (alpha,beta)4. Requires Mg(2+) as cofactor. The cofactor is Mn(2+).

The catalysed reaction is hydrogencarbonate + L-glutamine + 2 ATP + H2O = carbamoyl phosphate + L-glutamate + 2 ADP + phosphate + 2 H(+). The enzyme catalyses hydrogencarbonate + NH4(+) + 2 ATP = carbamoyl phosphate + 2 ADP + phosphate + 2 H(+). The protein operates within amino-acid biosynthesis; L-arginine biosynthesis; carbamoyl phosphate from bicarbonate: step 1/1. It functions in the pathway pyrimidine metabolism; UMP biosynthesis via de novo pathway; (S)-dihydroorotate from bicarbonate: step 1/3. Large subunit of the glutamine-dependent carbamoyl phosphate synthetase (CPSase). CPSase catalyzes the formation of carbamoyl phosphate from the ammonia moiety of glutamine, carbonate, and phosphate donated by ATP, constituting the first step of 2 biosynthetic pathways, one leading to arginine and/or urea and the other to pyrimidine nucleotides. The large subunit (synthetase) binds the substrates ammonia (free or transferred from glutamine from the small subunit), hydrogencarbonate and ATP and carries out an ATP-coupled ligase reaction, activating hydrogencarbonate by forming carboxy phosphate which reacts with ammonia to form carbamoyl phosphate. The polypeptide is Carbamoyl phosphate synthase large chain (Neisseria meningitidis serogroup A / serotype 4A (strain DSM 15465 / Z2491)).